The chain runs to 362 residues: Phosphoserine aminotransferase (362 aa).

L-glutamate-binding residues include Ser-9 and Arg-42. Residues 76-77 (GR), Trp-102, Thr-153, Asp-174, and Gln-197 each bind pyridoxal 5'-phosphate. Lys-198 is subject to N6-(pyridoxal phosphate)lysine. A pyridoxal 5'-phosphate-binding site is contributed by 239–240 (NT).

It belongs to the class-V pyridoxal-phosphate-dependent aminotransferase family. SerC subfamily. In terms of assembly, homodimer. Pyridoxal 5'-phosphate is required as a cofactor.

The protein localises to the cytoplasm. The enzyme catalyses O-phospho-L-serine + 2-oxoglutarate = 3-phosphooxypyruvate + L-glutamate. It catalyses the reaction 4-(phosphooxy)-L-threonine + 2-oxoglutarate = (R)-3-hydroxy-2-oxo-4-phosphooxybutanoate + L-glutamate. It functions in the pathway amino-acid biosynthesis; L-serine biosynthesis; L-serine from 3-phospho-D-glycerate: step 2/3. Its pathway is cofactor biosynthesis; pyridoxine 5'-phosphate biosynthesis; pyridoxine 5'-phosphate from D-erythrose 4-phosphate: step 3/5. Catalyzes the reversible conversion of 3-phosphohydroxypyruvate to phosphoserine and of 3-hydroxy-2-oxo-4-phosphonooxybutanoate to phosphohydroxythreonine. This chain is Phosphoserine aminotransferase, found in Escherichia coli O127:H6 (strain E2348/69 / EPEC).